The primary structure comprises 73 residues: Translation initiation factor IF-1 (73 aa).

The S1-like domain occupies 1–72; it reads MAKDDVIEVE…TKGRITYRFI (72 aa).

The protein belongs to the IF-1 family. As to quaternary structure, component of the 30S ribosomal translation pre-initiation complex which assembles on the 30S ribosome in the order IF-2 and IF-3, IF-1 and N-formylmethionyl-tRNA(fMet); mRNA recruitment can occur at any time during PIC assembly.

Its subcellular location is the cytoplasm. One of the essential components for the initiation of protein synthesis. Stabilizes the binding of IF-2 and IF-3 on the 30S subunit to which N-formylmethionyl-tRNA(fMet) subsequently binds. Helps modulate mRNA selection, yielding the 30S pre-initiation complex (PIC). Upon addition of the 50S ribosomal subunit IF-1, IF-2 and IF-3 are released leaving the mature 70S translation initiation complex. The protein is Translation initiation factor IF-1 of Lactobacillus acidophilus (strain ATCC 700396 / NCK56 / N2 / NCFM).